We begin with the raw amino-acid sequence, 384 residues long: 8-amino-7-oxononanoate synthase (384 aa).

Residue arginine 21 coordinates substrate. Glycine 108–phenylalanine 109 is a pyridoxal 5'-phosphate binding site. Histidine 133 serves as a coordination point for substrate. Positions 179, 207, and 233 each coordinate pyridoxal 5'-phosphate. Residue lysine 236 is modified to N6-(pyridoxal phosphate)lysine. Substrate is bound at residue threonine 352.

Belongs to the class-II pyridoxal-phosphate-dependent aminotransferase family. BioF subfamily. As to quaternary structure, homodimer. It depends on pyridoxal 5'-phosphate as a cofactor.

It carries out the reaction 6-carboxyhexanoyl-[ACP] + L-alanine + H(+) = (8S)-8-amino-7-oxononanoate + holo-[ACP] + CO2. The protein operates within cofactor biosynthesis; biotin biosynthesis. Its function is as follows. Catalyzes the decarboxylative condensation of pimeloyl-[acyl-carrier protein] and L-alanine to produce 8-amino-7-oxononanoate (AON), [acyl-carrier protein], and carbon dioxide. The chain is 8-amino-7-oxononanoate synthase from Escherichia fergusonii (strain ATCC 35469 / DSM 13698 / CCUG 18766 / IAM 14443 / JCM 21226 / LMG 7866 / NBRC 102419 / NCTC 12128 / CDC 0568-73).